The sequence spans 785 residues: Protein PHTF2 (785 aa).

A PHTF domain is found at 46–191 (IQCLIGAYDQ…VHCQIVSTRT (146 aa)). Helical transmembrane passes span 136 to 156 (VIFFWLLVLYLLQVAAIVLFC) and 164 to 184 (IPLTEVIGPIWLMLLLGTVHC). Disordered stretches follow at residues 190 to 239 (RTPK…GTST) and 304 to 401 (RPEE…PESE). Basic residues predominate over residues 200–209 (GKRRRKLRKA). The segment covering 210 to 219 (AHLEVHREGD) has biased composition (basic and acidic residues). 2 stretches are compositionally biased toward polar residues: residues 220–239 (GSSTTDNTQEGAVQNHGTST) and 309–333 (AWNTGTLRNGPSKDTQRTITNVSDE). A glycan (N-linked (GlcNAc...) asparagine) is linked at asparagine 329. Positions 359 to 369 (RNRKSHHYKKH) are enriched in basic residues. Low complexity predominate over residues 378 to 390 (SGTSCSSRCSSSR). Residues 391–400 (QDSESARPES) are compositionally biased toward basic and acidic residues. A run of 4 helical transmembrane segments spans residues 497-517 (IGYQIFGNAVSLILGLTPFVF), 553-573 (VIISFVVRVSLVWIFFFLLCV), 634-654 (VIVSSAFLLTISVVFICCAQL), and 668-688 (WELVIWCISLTLFLLRFVTLG). 2 N-linked (GlcNAc...) asparagine glycosylation sites follow: asparagine 697 and asparagine 756. A helical membrane pass occupies residues 760–780 (VVILSAVSGVISDLLGFNLKL).

It localises to the membrane. In Homo sapiens (Human), this protein is Protein PHTF2 (PHTF2).